The sequence spans 913 residues: MTDVNKTQIIDYDGHIIDNLKEWMNNNKLSKLGFNYNVIAILGSQSSGKSTLLNNLFKTSFDVMNTKLGHSQTTQGLWLSYDKFEDELTDASNEETDVEPQNKSNNKHVINPTLILDVEGNDSKERGENRLTFEHRSALFSLALADCVIVNLWYHSLGNFTASNYGLLKTVMEVHLELFHQNVNCPKTILLFTVRDWFEEFAPLDIIREKIVDEYVNKIWCELKKSENSKNANIDDYFIIEVVGLSHGIIKKDEFLKDIKRLRHKWIYELRPINYSRNIPADGFAQYCNNIWNTIIKQSQLDIPSQQEMLATFRCQEIKNNVLNHISNTIKEKMVDSKNKYIENFKTWAEKDIIEKSLNEYLTDAARYQKIICLKTLEELLENLFIQLQIIVDNNLNFTQRILSSKFSKELNSMYSICTTDKSYFLFINDQNVDVTEQDENLSNVENIGENSKKGNQIKCINLWSNFLYNADMLEYTTIANFFDQYKKCSVEIIEPSISNNEDKDSQEKRNHDFNYKNSLTILATSIYKDTNRIRSVQCNILIERIRSTIKEELKNVDNMLITVKCSKDCWDYILKIVNKLEDYIYTNLSKCFINLKTGINTTYLNNGDNIYARLNTNCDYGLGYFQNEQITDFSDDAGKNDDEMDTEIDQNKNDMESLFNSKKFEIITKQNKKEKYVSTINNDLNKEMNNKKLISELKKFYTEIIIDALKIKLDEISNNIANIIINRFESVFNYDEIDQPRQWRNISAIELKNIFRVSKDYAFLIIEILQKNIKIDKIDNYLSTNFINTDIIEKGKIKAKKRIQEICRDAQYIQETGGHMSLKNVPFAFWVILLILGWNEILMFTRLFFRLNIILPMLIGFIIIVISCLYTGNAQILSYINKIIFIVIKNLYNFYKHLQTIGHQTTKPEKVE.

At Met-1 to Asn-825 the chain is on the cytoplasmic side. The region spanning Gly-33–Cys-288 is the GB1/RHD3-type G domain. GTP is bound at residue Gly-43–Ser-50. Residues Val-826–Thr-846 form a helical membrane-spanning segment. At Arg-847–Phe-849 the chain is on the lumenal side. A helical transmembrane segment spans residues Phe-850–Leu-870. Topologically, residues Tyr-871 to Glu-913 are cytoplasmic.

The protein belongs to the TRAFAC class dynamin-like GTPase superfamily. GB1/RHD3 GTPase family. RHD3 subfamily.

Its subcellular location is the endoplasmic reticulum membrane. In terms of biological role, probable GTP-binding protein involved in generating and maintaining the structure of the tubular endoplasmic reticulum network. The chain is Protein SEY1 homolog from Plasmodium berghei (strain Anka).